Consider the following 184-residue polypeptide: Ribonuclease HII (184 aa).

An RNase H type-2 domain is found at alanine 2–phenylalanine 184. A divalent metal cation contacts are provided by aspartate 8, glutamate 9, and aspartate 95.

This sequence belongs to the RNase HII family. Mn(2+) is required as a cofactor. Mg(2+) serves as cofactor.

Its subcellular location is the cytoplasm. It catalyses the reaction Endonucleolytic cleavage to 5'-phosphomonoester.. Endonuclease that specifically degrades the RNA of RNA-DNA hybrids. This chain is Ribonuclease HII, found in Campylobacter concisus (strain 13826).